Reading from the N-terminus, the 166-residue chain is Calmodulin-like protein 5 (166 aa).

4 EF-hand domains span residues 11 to 46 (EQVA…LGQT), 47 to 82 (PTRE…KASR), 96 to 131 (AADE…LGEK), and 132 to 166 (LTDE…LSDQ). The Ca(2+) site is built by aspartate 24, aspartate 26, aspartate 28, cysteine 30, glutamate 35, aspartate 60, aspartate 62, asparagine 64, threonine 66, glutamate 71, aspartate 109, aspartate 111, aspartate 113, and glutamate 120. Residue lysine 131 is modified to N6,N6,N6-trimethyllysine. Residues aspartate 145, aspartate 147, aspartate 149, glutamine 151, and glutamate 156 each contribute to the Ca(2+) site.

Belongs to the calmodulin family.

In terms of biological role, potential calcium sensor. The chain is Calmodulin-like protein 5 (CML5) from Oryza sativa subsp. japonica (Rice).